The following is a 73-amino-acid chain: Cell division protein ZapB (73 aa).

Residues Leu3 to Gly67 adopt a coiled-coil conformation.

The protein belongs to the ZapB family. In terms of assembly, homodimer. The ends of the coiled-coil dimer bind to each other, forming polymers. Interacts with FtsZ.

The protein resides in the cytoplasm. Non-essential, abundant cell division factor that is required for proper Z-ring formation. It is recruited early to the divisome by direct interaction with FtsZ, stimulating Z-ring assembly and thereby promoting cell division earlier in the cell cycle. Its recruitment to the Z-ring requires functional FtsA or ZipA. This chain is Cell division protein ZapB, found in Shewanella sp. (strain MR-4).